The following is a 467-amino-acid chain: Argininosuccinate lyase (467 aa).

The protein belongs to the lyase 1 family. Argininosuccinate lyase subfamily.

The protein localises to the cytoplasm. The catalysed reaction is 2-(N(omega)-L-arginino)succinate = fumarate + L-arginine. Its pathway is amino-acid biosynthesis; L-arginine biosynthesis; L-arginine from L-ornithine and carbamoyl phosphate: step 3/3. The chain is Argininosuccinate lyase from Chromohalobacter salexigens (strain ATCC BAA-138 / DSM 3043 / CIP 106854 / NCIMB 13768 / 1H11).